We begin with the raw amino-acid sequence, 4391 residues long: Basement membrane-specific heparan sulfate proteoglycan core protein (4391 aa).

Residues 1-21 (MGWRAAGALLLALLLHGRLLA) form the signal peptide. An O-linked (GalNAc...) threonine glycan is attached at Thr-42. Residues Ser-65, Ser-71, and Ser-76 are each glycosylated (O-linked (Xyl...) (heparan sulfate) serine). Positions 80-191 (QMVYFRALVN…QGFQFRRLGT (112 aa)) constitute an SEA domain. Asn-89 carries an N-linked (GlcNAc...) asparagine glycan. LDL-receptor class A domains are found at residues 198-235 (ACTE…LNCE), 284-320 (PCGP…LDCG), 324-360 (PCEP…ANCP), and 367-404 (VCGP…FGCM). Cystine bridges form between Cys-199–Cys-212, Cys-206–Cys-225, Cys-219–Cys-234, Cys-285–Cys-297, Cys-292–Cys-310, Cys-304–Cys-319, Cys-325–Cys-337, Cys-332–Cys-350, Cys-344–Cys-359, Cys-368–Cys-381, Cys-375–Cys-394, and Cys-388–Cys-403. Positions 405 to 504 (PPQVVTPPRE…VLELVPQRGP (100 aa)) constitute an Ig-like C2-type 1 domain. Residues 521-530 (CFCFGITSVC) form the Laminin EGF-like 1; first part domain. A Laminin IV type A 1 domain is found at 538–730 (DQIRLRFDQP…SHGRAHSVEE (193 aa)). Asn-554 is a glycosylation site (N-linked (GlcNAc...) asparagine). The 33-residue stretch at 731 to 763 (CRCPIGYSGLSCESCDAHFTRVPGGPYLGTCSG) folds into the Laminin EGF-like 1; second part domain. 11 cysteine pairs are disulfide-bonded: Cys-764–Cys-773, Cys-766–Cys-780, Cys-783–Cys-792, Cys-795–Cys-811, Cys-814–Cys-829, Cys-816–Cys-839, Cys-842–Cys-851, Cys-854–Cys-869, Cys-879–Cys-892, Cys-894–Cys-903, and Cys-906–Cys-921. 2 Laminin EGF-like domains span residues 764–813 (CNCN…SCRP) and 814–871 (CPCP…KCRP). The region spanning 879–923 (CDERGSMGTSGEACRCKNNVVGRLCNECADGSFHLSTRNPDGCLK) is the Laminin EGF-like 4; truncated domain. The Laminin EGF-like 5; first part domain occupies 924–933 (CFCMGVSRHC). The region spanning 941-1125 (AQLHGASEEP…GQDPALEVEQ (185 aa)) is the Laminin IV type A 2 domain. Positions 1126-1158 (CSCPPGYRGPSCQDCDTGYTRTPSGLYLGTCER) constitute a Laminin EGF-like 5; second part domain. Cystine bridges form between Cys-1159-Cys-1168, Cys-1161-Cys-1175, Cys-1178-Cys-1187, Cys-1190-Cys-1206, Cys-1209-Cys-1224, Cys-1211-Cys-1234, Cys-1237-Cys-1246, Cys-1249-Cys-1263, Cys-1275-Cys-1287, Cys-1277-Cys-1293, Cys-1295-Cys-1304, and Cys-1307-Cys-1322. 3 consecutive Laminin EGF-like domains span residues 1159 to 1208 (CSCH…DCQL), 1209 to 1265 (CPCY…PCQR), and 1275 to 1324 (CNCD…GCLP). In terms of domain architecture, Laminin EGF-like 9; first part spans 1325–1334 (CFCMGITQQC). The 186-residue stretch at 1344–1529 (ISTHFAPGDF…NRPRALEVEE (186 aa)) folds into the Laminin IV type A 3 domain. The Laminin EGF-like 9; second part domain occupies 1530–1562 (CRCPPGYIGLSCQDCAPGYTRTGSGLYLGHCEL). Cystine bridges form between Cys-1563–Cys-1572, Cys-1565–Cys-1579, Cys-1582–Cys-1591, Cys-1594–Cys-1610, Cys-1613–Cys-1628, Cys-1615–Cys-1638, Cys-1641–Cys-1650, and Cys-1653–Cys-1668. 2 Laminin EGF-like domains span residues 1563–1612 (CECN…DCQP) and 1613–1670 (CACP…QCLP). 21 consecutive Ig-like C2-type domains span residues 1677-1771 (LVVE…SKPI), 1772-1865 (TVTV…TLSA), 1866-1955 (PVVS…GGGG), 1956-2051 (PRVQ…ASPP), 2052-2151 (PVKI…PGST), 2152-2244 (RPIR…PGPI), 2245-2340 (PPVR…AGST), 2341-2436 (QPIR…LGVT), 2437-2533 (PTVR…QGVA), 2534-2629 (YPVR…PSVS), 2630-2726 (PPIR…PGSS), 2727-2826 (MPIR…PGGA), 2827-2924 (PPIR…PGLA), 2925-3021 (QPIY…RLRS), 3022-3112 (PVIS…HGPP), 3113-3211 (TVSV…APGA), 3212-3298 (PQVQ…VESP), 3299-3399 (PYAT…AGST), 3400-3488 (PTVQ…ALPS), 3489-3574 (VLIN…LVQA), and 3575-3662 (LPQI…PERV). The N-linked (GlcNAc...) asparagine glycan is linked to Asn-1755. Asn-2121 is a glycosylation site (N-linked (GlcNAc...) asparagine). Residues 2994–3014 (ASGPGPEQEASFTVTVPPSEG) are disordered. O-linked (Xyl...) (chondroitin sulfate) serine glycosylation is present at Ser-2995. The span at 3003–3014 (ASFTVTVPPSEG) shows a compositional bias: polar residues. Asn-3072 and Asn-3105 each carry an N-linked (GlcNAc...) asparagine glycan. N-linked (GlcNAc...) asparagine glycosylation occurs at Asn-3279. Positions 3663 to 3843 (VPYFTQTPYS…DLNLTAHGIS (181 aa)) constitute a Laminin G-like 1 domain. Residues Asn-3780 and Asn-3836 are each glycosylated (N-linked (GlcNAc...) asparagine). Disulfide bonds link Cys-3819–Cys-3845, Cys-3848–Cys-3859, Cys-3853–Cys-3869, Cys-3871–Cys-3880, Cys-3888–Cys-3899, Cys-3893–Cys-3910, and Cys-3912–Cys-3921. EGF-like domains lie at 3844 to 3881 (HCPT…SRCE) and 3884 to 3922 (QALH…LRCE). In terms of domain architecture, Laminin G-like 2 spans 3928–4103 (TTPSLSGAGS…LGSQGIGQCY (176 aa)). Ser-3933 carries an O-linked (Xyl...) (chondroitin sulfate) serine glycan. A glycan (N-linked (GlcNAc...) asparagine) is linked at Asn-4068. Cystine bridges form between Cys-4076–Cys-4102, Cys-4108–Cys-4119, Cys-4113–Cys-4129, Cys-4131–Cys-4140, Cys-4147–Cys-4159, Cys-4153–Cys-4164, and Cys-4166–Cys-4175. EGF-like domains lie at 4104-4141 (DSSP…DLCE) and 4143-4176 (EENP…PRCQ). A mediates motor neuron attachment region spans residues 4149-4151 (LRE). O-linked (Xyl...) (chondroitin sulfate) serine glycosylation is found at Ser-4179 and Ser-4193. A Laminin G-like 3 domain is found at 4201-4389 (QYGAYFHDDG…AQAGANTRPC (189 aa)). Ca(2+) is bound by residues Asp-4258 and Leu-4275. Residues 4299 to 4301 (LRE) form a mediates motor neuron attachment region. Residues Ala-4325 and Asn-4327 each contribute to the Ca(2+) site. Cys-4355 and Cys-4389 are oxidised to a cystine. Residues 4364–4391 (ARPGAPPPQPLDLQHRAQAGANTRPCPS) are disordered.

Has a strong tendency to aggregate in dimers or stellate structures. Interacts with other basement membrane components such as laminin, prolargin and collagen type IV. Interacts with COL13A1. Interacts with FGFBP1. Interacts with VWA1. Interacts (via C-terminus) with ECM1 (via C-terminus). Interacts with SVEP1. Post-translationally, proteolytic processing produces the C-terminal angiogenic peptide, endorepellin. This peptide can be further processed to produce the LG3 peptide. In terms of processing, O-glycosylated with core 1 or possibly core 8 glycans. Contains three heparan sulfate chains. Also contains chondroitin sulfate. In terms of tissue distribution, detected in cerebrospinal fluid, fibroblasts and urine (at protein level).

It is found in the secreted. The protein localises to the extracellular space. The protein resides in the extracellular matrix. It localises to the basement membrane. Its function is as follows. Integral component of basement membranes. Component of the glomerular basement membrane (GBM), responsible for the fixed negative electrostatic membrane charge, and which provides a barrier which is both size- and charge-selective. It serves as an attachment substrate for cells. Plays essential roles in vascularization. Critical for normal heart development and for regulating the vascular response to injury. Also required for avascular cartilage development. In terms of biological role, anti-angiogenic and anti-tumor peptide that inhibits endothelial cell migration, collagen-induced endothelial tube morphogenesis and blood vessel growth in the chorioallantoic membrane. Blocks endothelial cell adhesion to fibronectin and type I collagen. Anti-tumor agent in neovascularization. Interaction with its ligand, integrin alpha2/beta1, is required for the anti-angiogenic properties. Evokes a reduction in phosphorylation of receptor tyrosine kinases via alpha2/beta1 integrin-mediated activation of the tyrosine phosphatase, PTPN6. Functionally, has anti-angiogenic properties that require binding of calcium ions for full activity. The sequence is that of Basement membrane-specific heparan sulfate proteoglycan core protein (HSPG2) from Homo sapiens (Human).